The sequence spans 127 residues: Large ribosomal subunit protein bL20 (127 aa).

The protein belongs to the bacterial ribosomal protein bL20 family.

Functionally, binds directly to 23S ribosomal RNA and is necessary for the in vitro assembly process of the 50S ribosomal subunit. It is not involved in the protein synthesizing functions of that subunit. In Opitutus terrae (strain DSM 11246 / JCM 15787 / PB90-1), this protein is Large ribosomal subunit protein bL20.